Consider the following 562-residue polypeptide: Dihydroxy-acid dehydratase (562 aa).

A Mg(2+)-binding site is contributed by Asp-80. Cys-121 contributes to the [2Fe-2S] cluster binding site. Residues Asp-122 and Lys-123 each coordinate Mg(2+). Lys-123 carries the N6-carboxylysine modification. Cys-194 contributes to the [2Fe-2S] cluster binding site. Glu-446 lines the Mg(2+) pocket. The Proton acceptor role is filled by Ser-472.

The protein belongs to the IlvD/Edd family. As to quaternary structure, homodimer. Requires [2Fe-2S] cluster as cofactor. Mg(2+) is required as a cofactor.

It carries out the reaction (2R)-2,3-dihydroxy-3-methylbutanoate = 3-methyl-2-oxobutanoate + H2O. The enzyme catalyses (2R,3R)-2,3-dihydroxy-3-methylpentanoate = (S)-3-methyl-2-oxopentanoate + H2O. It functions in the pathway amino-acid biosynthesis; L-isoleucine biosynthesis; L-isoleucine from 2-oxobutanoate: step 3/4. Its pathway is amino-acid biosynthesis; L-valine biosynthesis; L-valine from pyruvate: step 3/4. Functionally, functions in the biosynthesis of branched-chain amino acids. Catalyzes the dehydration of (2R,3R)-2,3-dihydroxy-3-methylpentanoate (2,3-dihydroxy-3-methylvalerate) into 2-oxo-3-methylpentanoate (2-oxo-3-methylvalerate) and of (2R)-2,3-dihydroxy-3-methylbutanoate (2,3-dihydroxyisovalerate) into 2-oxo-3-methylbutanoate (2-oxoisovalerate), the penultimate precursor to L-isoleucine and L-valine, respectively. This Staphylococcus epidermidis (strain ATCC 35984 / DSM 28319 / BCRC 17069 / CCUG 31568 / BM 3577 / RP62A) protein is Dihydroxy-acid dehydratase.